A 951-amino-acid polypeptide reads, in one-letter code: MMTSNILSRFLPPNGSPSVYETLRQQDAESNPSDVEERAGLEFEDDRRTQFSDRELEEAMVDAARDGIRSPSPSPSEPFLTQRSPQRTSGTATAKTGGRRRKHSRPRWMHQDPDDGDDDVPPSLLVEGHQDDDEMRSRLPPPPPSHRHPQRELSPAPGPSSRADRARWNTTREQLPLHNDGRGQRPGVIWSLGHPNLASVDPKEKAMWLWANVENLDNFLKDVYTYFLGNGIWSILLNRGLSLLTFAFVVGFSTFLTNCIDYRNFRGSRKMDDILIQQCTKKMSMSSTFLLWLLTVFWIGKAFQYLMDIRRLKHMHDFYYYLLGISDSEIQTISWQEVVSRLMTLRDANPATAGAVSARHRKFMGSQSKQRMDAHDIANRLMRKENYLIALVNKDILDLTLPIPFLRNRQLFSQTLEWNINLCIMDYVFNDQGQVRTLFLKDTHRKALSEGLRRRFIFAGIMNIFVAPFIVVYFLMHYFFRYFNEYKKNPAQIGSRQYTPLAEWKFREFNELWHLFERRVNMSYPFASRYVDQFPKDKTVQVAGFVAFVSGALASVLALVSIIDPELFLGFEITHDRTVLFYLGVFGSVWAFARGLVPEETNVFDPEFALLEVIDFTHYFPNHWKGRLHSDEVRKEFAVLYQMKIVIFLEEILSMIFTPFILWFSLPKCSDRLIDFFREFTVHVDGMGYLCSFAVFDFKKGTNVISQGGTGRRESGRQDLRADYFSTKDGKMLASYYGFLDNYGGNRPANPSSRRQFHPPPAFPTLGSPSAIEMGNIGERLERTQTRHGPAATFMGQQSGLGPGFGAAGFGDHASPAPSILLDPHHQPTASDFRTANRSALYPRFRSSRPVRPITDPIEDDNESPSAEIRRGAVKKSPHTTTGSSGGAIGTSDSNLGESWRMNLIGDELDKDTGEDGENVDEIAGNAGVLGLIQQFQKVSKDNRGRTTVGI.

The interval 1-165 is disordered; that stretch reads MMTSNILSRF…APGPSSRADR (165 aa). Topologically, residues 1–239 are cytoplasmic; that stretch reads MMTSNILSRF…NGIWSILLNR (239 aa). Residues 16–33 are compositionally biased toward polar residues; it reads SPSVYETLRQQDAESNPS. Basic and acidic residues predominate over residues 35 to 54; that stretch reads VEERAGLEFEDDRRTQFSDR. Positions 79 to 94 are enriched in polar residues; it reads FLTQRSPQRTSGTATA. A compositionally biased stretch (basic residues) spans 97–108; that stretch reads GGRRRKHSRPRW. The helical transmembrane segment at 240–260 threads the bilayer; sequence GLSLLTFAFVVGFSTFLTNCI. At 261-288 the chain is on the lumenal side; sequence DYRNFRGSRKMDDILIQQCTKKMSMSST. A helical transmembrane segment spans residues 289 to 309; sequence FLLWLLTVFWIGKAFQYLMDI. Residues 310–455 lie on the Cytoplasmic side of the membrane; it reads RRLKHMHDFY…KALSEGLRRR (146 aa). An intramembrane segment occupies 456 to 476; sequence FIFAGIMNIFVAPFIVVYFLM. Residues 477–542 are Cytoplasmic-facing; sequence HYFFRYFNEY…QFPKDKTVQV (66 aa). A helical transmembrane segment spans residues 543-563; it reads AGFVAFVSGALASVLALVSII. The Lumenal portion of the chain corresponds to 564–577; sequence DPELFLGFEITHDR. A helical membrane pass occupies residues 578 to 598; that stretch reads TVLFYLGVFGSVWAFARGLVP. The Cytoplasmic portion of the chain corresponds to 599–644; it reads EETNVFDPEFALLEVIDFTHYFPNHWKGRLHSDEVRKEFAVLYQMK. Residues 645–665 lie within the membrane without spanning it; it reads IVIFLEEILSMIFTPFILWFS. The Cytoplasmic portion of the chain corresponds to 666–951; that stretch reads LPKCSDRLID…DNRGRTTVGI (286 aa). Positions 848–897 are disordered; the sequence is SRPVRPITDPIEDDNESPSAEIRRGAVKKSPHTTTGSSGGAIGTSDSNLG.

The protein belongs to the ATG9 family. As to quaternary structure, homotrimer; forms a homotrimer with a central pore that forms a path between the two membrane leaflets. Post-translationally, phosphorylated by atg1. Atg1 phosphorylation is required for preautophagosome elongation.

Its subcellular location is the preautophagosomal structure membrane. The protein resides in the cytoplasmic vesicle membrane. It localises to the golgi apparatus membrane. It is found in the endoplasmic reticulum membrane. It catalyses the reaction a 1,2-diacyl-sn-glycero-3-phosphocholine(in) = a 1,2-diacyl-sn-glycero-3-phosphocholine(out). The enzyme catalyses a 1,2-diacyl-sn-glycero-3-phospho-L-serine(in) = a 1,2-diacyl-sn-glycero-3-phospho-L-serine(out). It carries out the reaction a 1,2-diacyl-sn-glycero-3-phosphoethanolamine(in) = a 1,2-diacyl-sn-glycero-3-phosphoethanolamine(out). The catalysed reaction is a 1,2-diacyl-sn-glycero-3-phospho-(1D-myo-inositol-3-phosphate)(in) = a 1,2-diacyl-sn-glycero-3-phospho-(1D-myo-inositol-3-phosphate)(out). In terms of biological role, phospholipid scramblase involved in autophagy and cytoplasm to vacuole transport (Cvt) vesicle formation. Cycles between the preautophagosomal structure/phagophore assembly site (PAS) and the cytoplasmic vesicle pool and supplies membrane for the growing autophagosome. Lipid scramblase activity plays a key role in preautophagosomal structure/phagophore assembly by distributing the phospholipids that arrive through atg2 from the cytoplasmic to the luminal leaflet of the bilayer, thereby driving autophagosomal membrane expansion. Required for mitophagy. Also involved in endoplasmic reticulum-specific autophagic process and is essential for the survival of cells subjected to severe ER stress. Different machineries are required for anterograde trafficking to the PAS during either the Cvt pathway or bulk autophagy and for retrograde trafficking. In Aspergillus oryzae (strain ATCC 42149 / RIB 40) (Yellow koji mold), this protein is Autophagy-related protein 9 (atg9).